The chain runs to 208 residues: Large ribosomal subunit protein uL3 (208 aa).

The segment at 134-159 (SKFHREAGSTGHCTTPGRSFKNTTMP) is disordered. Residues 144–158 (GHCTTPGRSFKNTTM) are compositionally biased toward polar residues.

This sequence belongs to the universal ribosomal protein uL3 family. In terms of assembly, part of the 50S ribosomal subunit. Forms a cluster with proteins L14 and L19.

In terms of biological role, one of the primary rRNA binding proteins, it binds directly near the 3'-end of the 23S rRNA, where it nucleates assembly of the 50S subunit. This is Large ribosomal subunit protein uL3 from Treponema denticola (strain ATCC 35405 / DSM 14222 / CIP 103919 / JCM 8153 / KCTC 15104).